The following is a 495-amino-acid chain: ATP synthase subunit alpha, chloroplastic (495 aa).

170-177 (GDRQTGKT) is a binding site for ATP.

Belongs to the ATPase alpha/beta chains family. In terms of assembly, F-type ATPases have 2 components, CF(1) - the catalytic core - and CF(0) - the membrane proton channel. CF(1) has five subunits: alpha(3), beta(3), gamma(1), delta(1), epsilon(1). CF(0) has four main subunits: a, b, b' and c.

It localises to the plastid. It is found in the chloroplast thylakoid membrane. The catalysed reaction is ATP + H2O + 4 H(+)(in) = ADP + phosphate + 5 H(+)(out). Its function is as follows. Produces ATP from ADP in the presence of a proton gradient across the membrane. The alpha chain is a regulatory subunit. This Cyanidioschyzon merolae (strain NIES-3377 / 10D) (Unicellular red alga) protein is ATP synthase subunit alpha, chloroplastic.